The following is a 164-amino-acid chain: CB1 cannabinoid receptor-interacting protein 1 (164 aa).

Belongs to the CNRIP family. In terms of assembly, interacts with the cannabinoid receptor CNR1 (via C-terminus). Does not interact with cannabinoid receptor CNR2. In terms of tissue distribution, highly expressed in brain. Also detected in heart, lung, intestine, kidney, testis, spleen, liver and muscle (at protein level).

Its function is as follows. Suppresses cannabinoid receptor CNR1-mediated tonic inhibition of voltage-gated calcium channels. The polypeptide is CB1 cannabinoid receptor-interacting protein 1 (Cnrip1) (Mus musculus (Mouse)).